We begin with the raw amino-acid sequence, 163 residues long: MIKEIIAKHFNLADKNIQLLPKFNIILNKREIIVKEDKCISCGKCIEICPVNAITYSSDGLYITINKEKCVFCGKCKKVCPTNAIVIIRLRCEINEDARIIEVDKYEFIDYISERCASCLVCLRNCPFNAIEEYGSKIRIDINKCELCGKCEEICPLNAIILR.

4 4Fe-4S ferredoxin-type domains span residues 30 to 59 (REII…YSSD), 61 to 90 (LYIT…IIRL), 105 to 136 (KYEF…EYGS), and 136 to 163 (SKIR…IILR). [4Fe-4S] cluster is bound by residues C39, C42, C45, C49, C70, C73, C76, C80, C116, C119, C122, C126, C145, C148, C151, and C155.

This is an uncharacterized protein from Methanocaldococcus jannaschii (strain ATCC 43067 / DSM 2661 / JAL-1 / JCM 10045 / NBRC 100440) (Methanococcus jannaschii).